The sequence spans 344 residues: Fructose-1,6-bisphosphatase class 1 (344 aa).

The Mg(2+) site is built by glutamate 92, aspartate 115, leucine 117, and aspartate 118. Substrate contacts are provided by residues 118–121, asparagine 211, tyrosine 244, and lysine 274; that span reads DGSS. Glutamate 280 contributes to the Mg(2+) binding site.

Belongs to the FBPase class 1 family. Homotetramer. Mg(2+) is required as a cofactor.

The protein resides in the cytoplasm. It carries out the reaction beta-D-fructose 1,6-bisphosphate + H2O = beta-D-fructose 6-phosphate + phosphate. It participates in carbohydrate biosynthesis; gluconeogenesis. The chain is Fructose-1,6-bisphosphatase class 1 from Aeromonas hydrophila subsp. hydrophila (strain ATCC 7966 / DSM 30187 / BCRC 13018 / CCUG 14551 / JCM 1027 / KCTC 2358 / NCIMB 9240 / NCTC 8049).